The following is a 312-amino-acid chain: 4-hydroxyphenylacetate decarboxylase activating enzyme (312 aa).

A Radical SAM core domain is found at 16–299; it reads HDGPGCRTSV…MEHLQQLYLD (284 aa). 7 residues coordinate [4Fe-4S] cluster: C30, C34, C37, C56, C62, C65, and C101. 36–38 is a binding site for S-adenosyl-L-methionine; the sequence is WCA. 4Fe-4S ferredoxin-type domains follow at residues 47-79 and 80-112; these read KHIM…FSED and GKLK…CVKE. S-adenosyl-L-methionine-binding positions include G140, 189 to 191, and H263; that span reads DVK.

This sequence belongs to the organic radical-activating enzymes family. In terms of assembly, monomer. Requires [4Fe-4S] cluster as cofactor.

It carries out the reaction glycyl-[protein] + reduced [flavodoxin] + S-adenosyl-L-methionine = glycin-2-yl radical-[protein] + semiquinone [flavodoxin] + 5'-deoxyadenosine + L-methionine + H(+). In terms of biological role, catalyzes activation of 4-hydroxyphenylacetate decarboxylase under anaerobic conditions by generation of an organic free radical on a glycine residue, via a homolytic cleavage of S-adenosyl-L-methionine (SAM). This is 4-hydroxyphenylacetate decarboxylase activating enzyme from Clostridium scatologenes.